The sequence spans 609 residues: (R)-linalool synthase TPS5, chloroplastic (609 aa).

A chloroplast-targeting transit peptide spans 1–42 (MVSILSNIGMMVVTFKRPSLFTSLRRRSANNIIITKHSHPIS). (2E)-geranyl diphosphate contacts are provided by R325, D362, D366, R503, and D506. Mg(2+)-binding residues include D362 and D366. Positions 362-366 (DDIYD) match the DDXXD motif motif. Mg(2+)-binding residues include D506, T510, and E514.

This sequence belongs to the terpene synthase family. Tpsb subfamily. Requires Mg(2+) as cofactor. Mn(2+) is required as a cofactor. Highly expressed in young fruits and plant tops. Expressed in flower buds and trichomes of petioles and stems. Expressed at low levels in young leaves, stems, petioles, sepals and petals.

It localises to the plastid. Its subcellular location is the chloroplast. The catalysed reaction is (2E)-geranyl diphosphate + H2O = (R)-linalool + diphosphate. It carries out the reaction (2E,6E)-farnesyl diphosphate + H2O = (6E)-nerolidol + diphosphate. It functions in the pathway secondary metabolite biosynthesis; terpenoid biosynthesis. In terms of biological role, involved in monoterpene (C10) biosynthesis in glandular trichomes. Converts geranyl diphosphate to linalool in glandular trichomes in response to jasmonate (JA). Can convert farnesyl diphosphate to nerolidol in vitro. This Solanum lycopersicum (Tomato) protein is (R)-linalool synthase TPS5, chloroplastic.